The chain runs to 217 residues: N-(5'-phosphoribosyl)anthranilate isomerase (217 aa).

This sequence belongs to the TrpF family.

It catalyses the reaction N-(5-phospho-beta-D-ribosyl)anthranilate = 1-(2-carboxyphenylamino)-1-deoxy-D-ribulose 5-phosphate. Its pathway is amino-acid biosynthesis; L-tryptophan biosynthesis; L-tryptophan from chorismate: step 3/5. This is N-(5'-phosphoribosyl)anthranilate isomerase from Chlorobium luteolum (strain DSM 273 / BCRC 81028 / 2530) (Pelodictyon luteolum).